Consider the following 686-residue polypeptide: U3 small nucleolar RNA-associated protein 4 homolog (686 aa).

WD repeat units follow at residues 14-53 (YVPS…FQEK), 57-96 (GHES…IKYT), 99-138 (AFGG…IQFA), 143-181 (RQKS…IIRK), 193-231 (KSRC…LVKS), 234-273 (VANA…SNSS), 285-322 (HHTH…EVKN), 324-359 (DAAL…ELWR), 435-474 (SFLR…FKHL), 482-521 (GTVE…LHCT), and 524-563 (AYNF…YTEW). Lys321 is covalently cross-linked (Glycyl lysine isopeptide (Lys-Gly) (interchain with G-Cter in SUMO2)).

Interacts with HIVEP1 Interacts with NOL11. Part of the small subunit (SSU) processome, composed of more than 70 proteins and the RNA chaperone small nucleolar RNA (snoRNA) U3. May be a component of the proposed t-UTP subcomplex of the ribosomal small subunit (SSU) processome containing at least UTP4, WDR43, HEATR1, UTP15, WDR75. May be phosphorylated during mitosis; may control the association of this protein with WRD43 and UTP15. In terms of tissue distribution, expressed in liver.

The protein localises to the nucleus. The protein resides in the nucleolus. Its subcellular location is the chromosome. In terms of biological role, ribosome biogenesis factor. Involved in nucleolar processing of pre-18S ribosomal RNA. Part of the small subunit (SSU) processome, first precursor of the small eukaryotic ribosomal subunit. During the assembly of the SSU processome in the nucleolus, many ribosome biogenesis factors, an RNA chaperone and ribosomal proteins associate with the nascent pre-rRNA and work in concert to generate RNA folding, modifications, rearrangements and cleavage as well as targeted d Involved in SSU pre-rRNA processing at sites A', A0, 1 and 2b. Required for optimal pre-ribosomal RNA transcription by RNA polymerase. May be a transcriptional regulator. In Mus musculus (Mouse), this protein is U3 small nucleolar RNA-associated protein 4 homolog (Utp4).